The primary structure comprises 330 residues: MTTYGSFPGARPRRLRTTPVMRRMVAETRLHPADFILPAFVREGVSEPVPIAAMPGVVQHTRDTLKKAAAEAVEAGVSGIMLFGVPEDGKKDAAGTAGTDPDGILQVALRDVRAEVGDELLVMSDLCLDEFTDHGHCGVLDGQGRVDNDATLERYAEMAQVQADAGAHVVGPSGMMDGQIGVIRDALDQIGREDVAILAYTAKYASAFYGPFREAVGSSLKGDRKTYQQDSANARESLRELALDLEEGADMVMVKPAGPYLDILAKVAEASDVPVAAYQISGEYSMIEAAAEKGWIDRDRAILESLTGIKRAGARNILTYWATEVARTLR.

The Schiff-base intermediate with substrate role is filled by lysine 203. Residues arginine 213 and arginine 224 each coordinate 5-aminolevulinate. Glutamate 240 serves as a coordination point for Mg(2+). The Schiff-base intermediate with substrate role is filled by lysine 255. Residues serine 281 and tyrosine 320 each contribute to the 5-aminolevulinate site.

This sequence belongs to the ALAD family. In terms of assembly, homooctamer.

It carries out the reaction 2 5-aminolevulinate = porphobilinogen + 2 H2O + H(+). The protein operates within porphyrin-containing compound metabolism; protoporphyrin-IX biosynthesis; coproporphyrinogen-III from 5-aminolevulinate: step 1/4. Functionally, catalyzes an early step in the biosynthesis of tetrapyrroles. Binds two molecules of 5-aminolevulinate per subunit, each at a distinct site, and catalyzes their condensation to form porphobilinogen. This Streptomyces coelicolor (strain ATCC BAA-471 / A3(2) / M145) protein is Delta-aminolevulinic acid dehydratase (hemB).